We begin with the raw amino-acid sequence, 199 residues long: dITP/XTP pyrophosphatase (199 aa).

Residue 8-13 coordinates substrate; sequence TSNINK. The active-site Proton acceptor is the aspartate 68. Residue aspartate 68 participates in Mg(2+) binding. Residues serine 69, 155 to 158, lysine 177, and 182 to 183 each bind substrate; these read FGYD and HR.

It belongs to the HAM1 NTPase family. As to quaternary structure, homodimer. Requires Mg(2+) as cofactor.

It carries out the reaction XTP + H2O = XMP + diphosphate + H(+). The enzyme catalyses dITP + H2O = dIMP + diphosphate + H(+). It catalyses the reaction ITP + H2O = IMP + diphosphate + H(+). Its function is as follows. Pyrophosphatase that catalyzes the hydrolysis of nucleoside triphosphates to their monophosphate derivatives, with a high preference for the non-canonical purine nucleotides XTP (xanthosine triphosphate), dITP (deoxyinosine triphosphate) and ITP. Seems to function as a house-cleaning enzyme that removes non-canonical purine nucleotides from the nucleotide pool, thus preventing their incorporation into DNA/RNA and avoiding chromosomal lesions. In Borrelia duttonii (strain Ly), this protein is dITP/XTP pyrophosphatase.